We begin with the raw amino-acid sequence, 506 residues long: Nostrin (506 aa).

One can recognise an F-BAR domain in the interval 1 to 260; that stretch reads MRDPLTDCPY…AISKIDIEKD (260 aa). Residue Ser114 is modified to Phosphoserine. Positions 160–222 form a coiled coil; that stretch reads SMTEKEKRKL…LELEKERIQL (63 aa). The REM-1 domain occupies 292–372; that stretch reads AMDKERRKSL…SYKLSSMLAE (81 aa). The region spanning 438-497 is the SH3 domain; it reads LSSRLCKALYSFQARQDDELNLEKGDIVIIHEKKEGGWWFGSLNGKKGHFPAAYVEELPS. Ser479 is modified (phosphoserine).

As to quaternary structure, homotrimer. Interacts with DAB2. Interacts with NOS3, DNM2, WASL and CAV1. Interacts (via SH3 domain) with DNM2; this interaction allows the recruitment of NOS3 to dynamin-positive structures. In terms of tissue distribution, expressed at highest levels in heart, kidney, placenta and lung, and at lowest levels in brain, thymus and spleen. Present in vascular endothelial cells and placenta. Over-expressed in placenta from women with pre-eclampsia (at protein level).

It is found in the cell membrane. It localises to the cytoplasmic vesicle. Its subcellular location is the cytoplasm. The protein resides in the cytoskeleton. The protein localises to the nucleus. Multivalent adapter protein which may decrease NOS3 activity by inducing its translocation away from the plasma membrane. The polypeptide is Nostrin (Homo sapiens (Human)).